Reading from the N-terminus, the 328-residue chain is BURP domain-containing protein 11 (328 aa).

Residues Phe74 to Arg318 form the BURP domain.

Expressed in roots.

This is BURP domain-containing protein 11 (BURP11) from Oryza sativa subsp. japonica (Rice).